The following is a 220-amino-acid chain: B-cell antigen receptor complex-associated protein alpha chain (220 aa).

Positions 1–28 (MPGGLEALRALPLLLFLSYACLGPGCQA) are cleaved as a signal peptide. One can recognise an Ig-like C2-type domain in the interval 29–117 (LRVEGGPPSL…ILKRSCGTYL (89 aa)). The Extracellular portion of the chain corresponds to 29 to 137 (LRVEGGPPSL…LDMGEGTKNR (109 aa)). An intrachain disulfide couples C50 to C101. N-linked (GlcNAc...) asparagine glycans are attached at residues N58 and N68. Residues 138–159 (IITAEGIILLFCAVVPGTLLLF) form a helical membrane-spanning segment. At 160 to 220 (RKRWQNEKFG…HIGDAQLEKP (61 aa)) the chain is on the cytoplasmic side. Residues 171 to 199 (DMPDDYEDENLYEGLNLDDCSMYEDISRG) form the ITAM domain. Phosphotyrosine; by SRC-type Tyr-kinases is present on residues Y182 and Y193. R198 carries the asymmetric dimethylarginine; by PRMT1 modification. Position 204 is a phosphotyrosine; by Tyr-kinases (Y204).

In terms of assembly, heterodimer of alpha and beta chains; disulfide-linked. Part of the B-cell antigen receptor complex where the alpha/beta chain heterodimer is non-covalently associated with an antigen-specific membrane-bound surface immunoglobulin of two heavy chains and two light chains. Interacts through its phosphorylated ITAM domain with the SH2 domains of SYK which stimulates SYK autophosphorylation and activation. Also interacts, when phosphorylated on Tyr-204, with the SH2 domain of BLNK/SLP65, bringing BLNK into proximity with SYK and allowing SYK to phosphorylate BLNK which is necessary for trafficking of the BCR to late endosomes. Interacts with Src-family tyrosine kinases including FYN and LYN, increasing their activity. Post-translationally, phosphorylated on tyrosine, serine and threonine residues upon B-cell activation. Phosphorylation of tyrosine residues by Src-family kinases, including LYN, is an early and essential feature of the BCR signaling cascade. The phosphorylated tyrosines serve as docking sites for SH2-domain containing kinases, leading to their activation which in turn leads to phosphorylation of downstream targets. Phosphorylation of serine and threonine residues may prevent subsequent tyrosine phosphorylation. Arginine methylation in the ITAM domain may interfere with the binding of SYK. It promotes signals leading to B-cell differentiation. In terms of tissue distribution, B-cells.

It is found in the cell membrane. In terms of biological role, required in cooperation with CD79B for initiation of the signal transduction cascade activated by binding of antigen to the B-cell antigen receptor complex (BCR) which leads to internalization of the complex, trafficking to late endosomes and antigen presentation. Also required for BCR surface expression and for efficient differentiation of pro- and pre-B-cells. Stimulates SYK autophosphorylation and activation. Binds to BLNK, bringing BLNK into proximity with SYK and allowing SYK to phosphorylate BLNK. Also interacts with and increases activity of some Src-family tyrosine kinases. Represses BCR signaling during development of immature B-cells. In Mus musculus (Mouse), this protein is B-cell antigen receptor complex-associated protein alpha chain (Cd79a).